The sequence spans 311 residues: Putative mitochondrial transporter UCP3 (311 aa).

Topologically, residues 1–10 (MVGLKPSEVP) are mitochondrial intermembrane. The chain crosses the membrane as a helical span at residues 11-32 (PTTAVKFLGAGTAACFADLLTF). Solcar repeat units lie at residues 11-105 (PTTA…VKQF), 114-205 (SSIT…IKEK), and 214-299 (DNFP…LKRA). Residues 33-76 (PLDTAKVRLQIQGENQATQAARRIQYRGVLGTILTMVRTEGPRS) are Mitochondrial matrix-facing. Residues 77-99 (PYNGLVAGLQRQMSFASIRIGLY) form a helical membrane-spanning segment. The Mitochondrial intermembrane portion of the chain corresponds to 100–119 (DSVKQFYTPKGSDHSSITTR). A helical transmembrane segment spans residues 120–136 (ILAGCTTGAMAVSCAQP). Topologically, residues 137 to 182 (TDVVKVRFQASIHLGAGSNRKYSGTMDAYRTIAREEGVRGLWKGTL) are mitochondrial matrix. Residues 183–199 (PNITRNAIVNCAEMVTY) traverse the membrane as a helical segment. Residues 200–216 (DIIKEKLLDYHLLTDNF) are Mitochondrial intermembrane-facing. Residues 217–236 (PCHLISAFGAGFCATVVASP) form a helical membrane-spanning segment. At 237 to 270 (VDVVKTRYMNSPPGQYCSPLDCMLKMVTQEGPTA) the chain is on the mitochondrial matrix side. A helical membrane pass occupies residues 271-293 (FYKGFTPSFLRLGTWNVVMFVTY). The segment at 278–300 (SFLRLGTWNVVMFVTYEQLKRAL) is purine nucleotide binding. The Mitochondrial intermembrane segment spans residues 294 to 311 (EQLKRALMKVQMLRESPF).

This sequence belongs to the mitochondrial carrier (TC 2.A.29) family. In terms of assembly, interacts with HAX1; the interaction is direct and calcium-dependent.

Its subcellular location is the mitochondrion inner membrane. In terms of biological role, putative transmembrane transporter that plays a role in mitochondrial metabolism via an as yet unclear mechanism. Originally, this mitochondrial protein was thought to act as a proton transmembrane transporter from the mitochondrial intermembrane space into the matrix, causing proton leaks through the inner mitochondrial membrane, thereby uncoupling mitochondrial membrane potential generation from ATP synthesis. However, this function is controversial and uncoupling may not be the function, or at least not the main function, but rather a consequence of more conventional metabolite transporter activity. This Canis lupus familiaris (Dog) protein is Putative mitochondrial transporter UCP3.